A 437-amino-acid polypeptide reads, in one-letter code: Serine--tRNA ligase (437 aa).

227–229 provides a ligand contact to L-serine; sequence TAE. ATP-binding positions include 258-260 and valine 274; that span reads RSE. Glutamate 281 contacts L-serine. Residue 347-350 participates in ATP binding; it reads ETHS. Threonine 382 is an L-serine binding site.

The protein belongs to the class-II aminoacyl-tRNA synthetase family. Type-1 seryl-tRNA synthetase subfamily. Homodimer. The tRNA molecule binds across the dimer.

The protein resides in the cytoplasm. It catalyses the reaction tRNA(Ser) + L-serine + ATP = L-seryl-tRNA(Ser) + AMP + diphosphate + H(+). The enzyme catalyses tRNA(Sec) + L-serine + ATP = L-seryl-tRNA(Sec) + AMP + diphosphate + H(+). The protein operates within aminoacyl-tRNA biosynthesis; selenocysteinyl-tRNA(Sec) biosynthesis; L-seryl-tRNA(Sec) from L-serine and tRNA(Sec): step 1/1. Functionally, catalyzes the attachment of serine to tRNA(Ser). Is also able to aminoacylate tRNA(Sec) with serine, to form the misacylated tRNA L-seryl-tRNA(Sec), which will be further converted into selenocysteinyl-tRNA(Sec). The sequence is that of Serine--tRNA ligase from Deinococcus geothermalis (strain DSM 11300 / CIP 105573 / AG-3a).